Reading from the N-terminus, the 91-residue chain is UPF0250 protein PputGB1_4855 (91 aa).

It belongs to the UPF0250 family.

This is UPF0250 protein PputGB1_4855 from Pseudomonas putida (strain GB-1).